The sequence spans 631 residues: Serine/threonine-protein kinase PLK3 (631 aa).

The segment at 1–59 is disordered; sequence MEPAAGFLSPRPFPRAAVPSAPPAGPGPPANASPRSEPEVLAGPRAPDPPGRLITDPLS. A compositionally biased stretch (pro residues) spans 20-31; that stretch reads SAPPAGPGPPAN. The Protein kinase domain maps to 63 to 315; that stretch reads YTKGRLLGKG…IEQILRHDFF (253 aa). ATP is bound by residues 69–77 and lysine 92; that span reads LGKGGFARC. Aspartate 186 acts as the Proton acceptor in catalysis. POLO box domains follow at residues 448 to 526 and 547 to 630; these read WVSK…YMEQ and LLLQ…DQSP.

It belongs to the protein kinase superfamily. Ser/Thr protein kinase family. CDC5/Polo subfamily. In terms of assembly, interacts (via the POLO-box domain) with CIB1; leading to inhibit PLK3 kinase activity. Interacts with GOLGB1. Post-translationally, phosphorylated in an ATM-dependent manner following DNA damage. Phosphorylated as cells enter mitosis and dephosphorylated as cells exit mitosis. As to expression, expressed in skin.

Its subcellular location is the cytoplasm. The protein localises to the nucleus. It localises to the nucleolus. It is found in the golgi apparatus. The protein resides in the cytoskeleton. Its subcellular location is the microtubule organizing center. The protein localises to the centrosome. The catalysed reaction is L-seryl-[protein] + ATP = O-phospho-L-seryl-[protein] + ADP + H(+). It carries out the reaction L-threonyl-[protein] + ATP = O-phospho-L-threonyl-[protein] + ADP + H(+). Serine/threonine-protein kinase involved in cell cycle regulation, response to stress and Golgi disassembly. Polo-like kinases act by binding and phosphorylating proteins that are already phosphorylated on a specific motif recognized by the POLO box domains. Phosphorylates ATF2, BCL2L1, CDC25A, CDC25C, CHEK2, HIF1A, JUN, p53/TP53, p73/TP73, PTEN, TOP2A and VRK1. Involved in cell cycle regulation: required for entry into S phase and cytokinesis. Phosphorylates BCL2L1, leading to regulate the G2 checkpoint and progression to cytokinesis during mitosis. Plays a key role in response to stress: rapidly activated upon stress stimulation, such as ionizing radiation, reactive oxygen species (ROS), hyperosmotic stress, UV irradiation and hypoxia. Involved in DNA damage response and G1/S transition checkpoint by phosphorylating CDC25A, p53/TP53 and p73/TP73. Phosphorylates p53/TP53 in response to reactive oxygen species (ROS), thereby promoting p53/TP53-mediated apoptosis. Phosphorylates CHEK2 in response to DNA damage, promoting the G2/M transition checkpoint. Phosphorylates the transcription factor p73/TP73 in response to DNA damage, leading to inhibit p73/TP73-mediated transcriptional activation and pro-apoptotic functions. Phosphorylates HIF1A and JUN is response to hypoxia. Phosphorylates ATF2 following hyperosmotic stress in corneal epithelium. Also involved in Golgi disassembly during the cell cycle: part of a MEK1/MAP2K1-dependent pathway that induces Golgi fragmentation during mitosis by mediating phosphorylation of VRK1. May participate in endomitotic cell cycle, a form of mitosis in which both karyokinesis and cytokinesis are interrupted and is a hallmark of megakaryocyte differentiation, via its interaction with CIB1. The sequence is that of Serine/threonine-protein kinase PLK3 (Plk3) from Mus musculus (Mouse).